The primary structure comprises 777 residues: Subtilisin-like protease SBT1.4 (777 aa).

Positions 1–25 are cleaved as a signal peptide; that stretch reads MAKLSLSSIFFVFPLLLCFFSPSSS. Positions 26-110 are cleaved as a propeptide — activation peptide; the sequence is SSDGLESYIV…VIPDQAREIH (85 aa). Positions 32-110 constitute an Inhibitor I9 domain; the sequence is SYIVHVQRSH…VIPDQAREIH (79 aa). Residues 115–614 enclose the Peptidase S8 domain; that stretch reads PAFLGFSQNS…AGHVDPNKAL (500 aa). The Charge relay system role is filled by Asp142. The N-linked (GlcNAc...) asparagine glycan is linked to Asn198. The interval 199–223 is disordered; that stretch reads GTKKHAAKESRSPRDTEGHGTHTAS. The segment covering 205–218 has biased composition (basic and acidic residues); sequence AKESRSPRDTEGHG. The active-site Charge relay system is the His217. N-linked (GlcNAc...) asparagine glycosylation is found at Asn232 and Asn395. Residues 376–461 form the PA domain; that stretch reads LSLVYSGDCG…VGAKAGDQIR (86 aa). Ser546 (charge relay system) is an active-site residue.

It belongs to the peptidase S8 family.

Its subcellular location is the secreted. This Arabidopsis thaliana (Mouse-ear cress) protein is Subtilisin-like protease SBT1.4.